The chain runs to 384 residues: Anhydro-N-acetylmuramic acid kinase (384 aa).

Residue 9–16 (GTSADGVD) coordinates ATP.

Belongs to the anhydro-N-acetylmuramic acid kinase family.

It carries out the reaction 1,6-anhydro-N-acetyl-beta-muramate + ATP + H2O = N-acetyl-D-muramate 6-phosphate + ADP + H(+). It participates in amino-sugar metabolism; 1,6-anhydro-N-acetylmuramate degradation. The protein operates within cell wall biogenesis; peptidoglycan recycling. Its function is as follows. Catalyzes the specific phosphorylation of 1,6-anhydro-N-acetylmuramic acid (anhMurNAc) with the simultaneous cleavage of the 1,6-anhydro ring, generating MurNAc-6-P. Is required for the utilization of anhMurNAc either imported from the medium or derived from its own cell wall murein, and thus plays a role in cell wall recycling. In Synechococcus sp. (strain CC9311), this protein is Anhydro-N-acetylmuramic acid kinase.